The following is a 511-amino-acid chain: MVGFRRGPRAPLRATSSLSLRWRVMLLAMSMVAMVVVLMSFAVYAVISAALYSDIDNQLQSRAQLLIASGSLAADPGKAIEGTAYSDVNAMLVNPGRSIYTANQPGQTLPVGAPEKAVIHGDLFLSRRTVSDQRVLAIHLPNGSSLLISKSLKPTEAVMTKLRAVLLIVGGVGVAVAAVAGGMVTRAGLRPVGRLTEAAERVARTDDLRPIPVFGSDELARLTEAFNLMLRALAESRERQARLVSDAGHELRTPLTSLRTNVELLMASMEPGAPRLPEQEMVGLREDVVAQIEELSTLVGDLVDLTRGDAGVVVHEPVDMAEVVDRSLERVRRRRNDIHFDVDVVGWQVYGDAAGLSRAALNLMDNAAKWSPPGGRVGIRLRQLDPSHAELVVSDNGPGISPQERRLVFERFYRSTSARAMPGSGLGLAIVKQVVLNHGGSLRIEDTVPGGQPPGTAICMLLPGRPMPDSAYPAAPDDKKTEPVDTRGANGANSRGSANVISVDSQSARAR.

Topologically, residues 1-26 are cytoplasmic; the sequence is MVGFRRGPRAPLRATSSLSLRWRVML. Residues 27 to 47 traverse the membrane as a helical segment; it reads LAMSMVAMVVVLMSFAVYAVI. Over 48–163 the chain is Extracellular; it reads SAALYSDIDN…PTEAVMTKLR (116 aa). The chain crosses the membrane as a helical span at residues 164–184; that stretch reads AVLLIVGGVGVAVAAVAGGMV. Residues 185 to 511 lie on the Cytoplasmic side of the membrane; it reads TRAGLRPVGR…SVDSQSARAR (327 aa). One can recognise an HAMP domain in the interval 186 to 238; sequence RAGLRPVGRLTEAAERVARTDDLRPIPVFGSDELARLTEAFNLMLRALAESRE. The Histidine kinase domain occupies 246–466; it reads DAGHELRTPL…AICMLLPGRP (221 aa). H249 is subject to Phosphohistidine; by autocatalysis. Positions 468–511 are disordered; sequence PDSAYPAAPDDKKTEPVDTRGANGANSRGSANVISVDSQSARAR. Positions 476-485 are enriched in basic and acidic residues; the sequence is PDDKKTEPVD. Polar residues predominate over residues 491–511; it reads GANSRGSANVISVDSQSARAR.

The cofactor is Mg(2+). It depends on Mn(2+) as a cofactor. Post-translationally, autophosphorylated.

The protein localises to the cell membrane. It carries out the reaction ATP + protein L-histidine = ADP + protein N-phospho-L-histidine.. Member of the two-component regulatory system MprB/MprA which contributes to maintaining a balance among several systems involved in stress resistance and is required for establishment and maintenance of persistent infection in the host. In response to environmental signals MprB acts both as a membrane-associated protein kinase that undergoes autophosphorylation and subsequently transfers the phosphate to MprA, and a protein phosphatase that dephosphorylates phospho-MprA. The protein is Signal transduction histidine-protein kinase/phosphatase MprB (mprB) of Mycobacterium ulcerans (strain Agy99).